A 944-amino-acid chain; its full sequence is ATP-dependent helicase fft1 (944 aa).

2 disordered regions span residues 89–109 (AAYD…ESSN) and 174–246 (SAQK…NSIP). Residues 92 to 108 (DPHDQPPERDVSLKESS) are compositionally biased toward basic and acidic residues. Positions 174–184 (SAQKLNNQPIE) are enriched in polar residues. Basic and acidic residues predominate over residues 186-203 (SSVDKENAKRKRYVEEGT). Over residues 217 to 227 (LSDEETNEDDL) the composition is skewed to acidic residues. Positions 230–246 (QSPTACTTDANIDNSIP) are enriched in polar residues. The Helicase ATP-binding domain maps to 426–592 (CLMYKAKLSG…ISLLAFMLPK (167 aa)). 439–446 (DEMGLGKT) serves as a coordination point for ATP. The short motif at 543 to 546 (DEGH) is the DEGH box element. One can recognise a Helicase C-terminal domain in the interval 766-923 (KVKKLCSLLK…DSEKIQKEIS (158 aa)).

It belongs to the SNF2/RAD54 helicase family.

It is found in the nucleus. It catalyses the reaction ATP + H2O = ADP + phosphate + H(+). Functionally, DNA helicase that possesses intrinsic ATP-dependent nucleosome-remodeling activity and is required for heterochromatin organization. This chain is ATP-dependent helicase fft1 (fft1), found in Schizosaccharomyces pombe (strain 972 / ATCC 24843) (Fission yeast).